Here is a 379-residue protein sequence, read N- to C-terminus: Cytochrome b (379 aa).

4 consecutive transmembrane segments (helical) span residues 34-54 (FGSLLGACLILQTITGIFLAM), 78-99 (WLIRNMHANGASLFFMCIYLHI), 114-134 (WNTGITLLLLTMATAFVGYVL), and 179-199 (FFTFHFLLPFTIMGMTMVHLL). The heme b site is built by H84 and H98. H183 and H197 together coordinate heme b. H202 lines the a ubiquinone pocket. Transmembrane regions (helical) follow at residues 227-247 (YKDLLGLILMLAFLLTLTLFY), 289-309 (LGGVLALLLSILVLFLMPTLH), 321-341 (LTQTLFWSFIANLMVLTWIGG), and 348-368 (FITIGQVASILHFLILLILMP).

This sequence belongs to the cytochrome b family. As to quaternary structure, the cytochrome bc1 complex contains 3 respiratory subunits (MT-CYB, CYC1 and UQCRFS1), 2 core proteins (UQCRC1 and UQCRC2) and probably 6 low-molecular weight proteins. The cofactor is heme b.

Its subcellular location is the mitochondrion inner membrane. In terms of biological role, component of the ubiquinol-cytochrome c reductase complex (complex III or cytochrome b-c1 complex) that is part of the mitochondrial respiratory chain. The b-c1 complex mediates electron transfer from ubiquinol to cytochrome c. Contributes to the generation of a proton gradient across the mitochondrial membrane that is then used for ATP synthesis. In Glyptemys muhlenbergii (Bog turtle), this protein is Cytochrome b (MT-CYB).